A 257-amino-acid polypeptide reads, in one-letter code: Phosphonates import ATP-binding protein PhnC (257 aa).

The ABC transporter domain maps to 4–248; that stretch reads IEFKNVSKVY…IFSEIYGRTI (245 aa). Residue 37–44 coordinates ATP; it reads GLSGAGKS.

Belongs to the ABC transporter superfamily. Phosphonates importer (TC 3.A.1.9.1) family. As to quaternary structure, the complex is composed of two ATP-binding proteins (PhnC), two transmembrane proteins (PhnE) and a solute-binding protein (PhnD).

Its subcellular location is the cell membrane. The catalysed reaction is phosphonate(out) + ATP + H2O = phosphonate(in) + ADP + phosphate + H(+). Part of the ABC transporter complex PhnCDE involved in phosphonates import. Responsible for energy coupling to the transport system. This Staphylococcus aureus (strain bovine RF122 / ET3-1) protein is Phosphonates import ATP-binding protein PhnC.